The chain runs to 194 residues: Probable GTP-binding protein EngB (194 aa).

In terms of domain architecture, EngB-type G spans 23–194 (DKMEFAFVGR…LNFMEEKLNN (172 aa)). Residues 31-38 (GRSNVGKS), 58-62 (GRTQL), 76-79 (DLPG), 142-145 (TKID), and 173-175 (HSS) contribute to the GTP site. S38 and T60 together coordinate Mg(2+).

Belongs to the TRAFAC class TrmE-Era-EngA-EngB-Septin-like GTPase superfamily. EngB GTPase family. The cofactor is Mg(2+).

Necessary for normal cell division and for the maintenance of normal septation. This chain is Probable GTP-binding protein EngB, found in Fusobacterium nucleatum subsp. nucleatum (strain ATCC 25586 / DSM 15643 / BCRC 10681 / CIP 101130 / JCM 8532 / KCTC 2640 / LMG 13131 / VPI 4355).